Reading from the N-terminus, the 231-residue chain is Protein HHL1, chloroplastic (231 aa).

The transit peptide at 1 to 39 (MEVSMSLNALTRLPLKNTGRFEEVGLARHSLFSSRTACR) directs the protein to the chloroplast. The helical transmembrane segment at 93 to 113 (YLWYPLSIIAGGTTAKIMVAA) threads the bilayer. The interval 206–231 (SFGKLSSLNPGSDEKTEETSDEKAKA) is disordered. Residues 217-231 (SDEKTEETSDEKAKA) show a composition bias toward basic and acidic residues.

In terms of assembly, interacts with psbB, psbC and LQY1, but not with psbA or psbD.

It localises to the plastid. The protein resides in the chloroplast thylakoid membrane. In terms of biological role, involved in photoprotection. Forms a complex with LQY1 that is involved in the repair and reassembly cycle of the PSII-LHCII supercomplex under high-light conditions. May function in guiding the release of psbC from PSII core monomers. In Arabidopsis thaliana (Mouse-ear cress), this protein is Protein HHL1, chloroplastic.